The sequence spans 815 residues: (-)-kolavenyl diphosphate synthase TPS10, chloroplastic (815 aa).

The N-terminal 50 residues, M1 to S50, are a transit peptide targeting the chloroplast. Residue K247 participates in substrate binding. The Mg(2+) site is built by D379 and D381. The DXDD motif signature appears at D379 to D382. Position 465 (K465) interacts with substrate.

Belongs to the terpene synthase family. Tpsc subfamily. Mg(2+) serves as cofactor.

The protein resides in the plastid. The protein localises to the chloroplast. It carries out the reaction (2E,6E,10E)-geranylgeranyl diphosphate = (-)-kolavenyl diphosphate. With respect to regulation, inhibited by high concentrations of magnesium. Its function is as follows. Diterpene synthase that catalyzes the formation of (-)-kolavenyl diphosphate from geranylgeranyl diphosphate (GGPP). The protein is (-)-kolavenyl diphosphate synthase TPS10, chloroplastic of Tripterygium wilfordii (Thunder God vine).